We begin with the raw amino-acid sequence, 294 residues long: NAD kinase (294 aa).

Catalysis depends on D74, which acts as the Proton acceptor. NAD(+) is bound by residues 74 to 75 (DG), 148 to 149 (NE), H159, R176, D178, 189 to 194 (TAYSLS), and Q249.

It belongs to the NAD kinase family. It depends on a divalent metal cation as a cofactor.

The protein resides in the cytoplasm. The catalysed reaction is NAD(+) + ATP = ADP + NADP(+) + H(+). Its function is as follows. Involved in the regulation of the intracellular balance of NAD and NADP, and is a key enzyme in the biosynthesis of NADP. Catalyzes specifically the phosphorylation on 2'-hydroxyl of the adenosine moiety of NAD to yield NADP. The sequence is that of NAD kinase from Vibrio vulnificus (strain YJ016).